The sequence spans 127 residues: MASKSVVVLLFLALIASSAIAQAPGPAPTRSPLPSPAQPPRTAAPTPSITPTPTPTPSATPTAAPVSPPAGSPLPSSASPPAPPTSLTPDGAPVAGPTGSTPVDNNNAATLAAGSLAGFVFVASLLL.

The N-terminal stretch at 1-21 is a signal peptide; the sequence is MASKSVVVLLFLALIASSAIA. Position 22 is a pyrrolidone carboxylic acid (glutamine 22). Residues 22-107 form a disordered region; sequence QAPGPAPTRS…TGSTPVDNNN (86 aa). 5 positions are modified to 4-hydroxyproline: proline 24, proline 26, proline 28, proline 32, and proline 36. Proline 24, proline 26, proline 28, proline 32, and proline 36 each carry an O-linked (Ara...) hydroxyproline glycan. Pro residues-rich tracts occupy residues 25–39, 48–58, and 66–86; these read GPAP…PAQP, SITPTPTPTPS, and VSPP…PPTS. The segment covering 98-107 has biased composition (polar residues); sequence TGSTPVDNNN. Residue asparagine 107 is the site of GPI-anchor amidated asparagine attachment. Residues 108–127 constitute a propeptide, removed in mature form; the sequence is AATLAAGSLAGFVFVASLLL.

This sequence belongs to the classical AGP family. Post-translationally, O-glycosylated on hydroxyprolines; noncontiguous hydroxylproline residues are glycosylated with arabinogalactan. Predominantly expressed in flowers and at a lower level in roots and siliques.

It is found in the cell membrane. Functionally, proteoglycan that seems to be implicated in diverse developmental roles such as differentiation, cell-cell recognition, embryogenesis and programmed cell death. This is Classical arabinogalactan protein 10 (AGP10) from Arabidopsis thaliana (Mouse-ear cress).